An 86-amino-acid chain; its full sequence is Triple QxxK/R motif-containing protein (86 aa).

A helical transmembrane segment spans residues 51-71; sequence VGLVLAAILALLLAFYAFFYL.

Belongs to the TRIQK family.

The protein resides in the endoplasmic reticulum membrane. May play a role in cell growth and maintenance of cell morphology. This Homo sapiens (Human) protein is Triple QxxK/R motif-containing protein (TRIQK).